We begin with the raw amino-acid sequence, 276 residues long: Omega-amidase NIT2-A (276 aa).

Positions 4–248 constitute a CN hydrolase domain; that stretch reads FKLSLVQFLV…ETVLSAEIDL (245 aa). The active-site Proton acceptor is Glu43. The active-site Proton donor is the Lys112. The Nucleophile role is filled by Cys153.

It belongs to the carbon-nitrogen hydrolase superfamily. NIT1/NIT2 family. Homodimer.

Its subcellular location is the cytoplasm. The enzyme catalyses 2-oxoglutaramate + H2O = 2-oxoglutarate + NH4(+). It carries out the reaction 2-oxosuccinamate + H2O = oxaloacetate + NH4(+). Has omega-amidase activity. The role of omega-amidase is to remove potentially toxic intermediates by converting 2-oxoglutaramate and 2-oxosuccinamate to biologically useful 2-oxoglutarate and oxaloacetate, respectively. The sequence is that of Omega-amidase NIT2-A (nit2a) from Xenopus laevis (African clawed frog).